The following is a 147-amino-acid chain: Myosin-2 essential light chain (147 aa).

EF-hand domains lie at 7 to 42, 80 to 115, and 115 to 147; these read DQLAEFQEAFNLFDNRGDGKIQLSQVGECLRALGQN, DTADDFIEGLRHFDKDASGYISSAELRHLLTTLGEK, and KLTDEEVEQLLANMEDQQGNINYEEFVRMVMSG. Position 30 is a phosphoserine (serine 30). Aspartate 93, aspartate 95, serine 97, tyrosine 99, and glutamate 104 together coordinate Ca(2+).

In terms of assembly, myosin is a hexamer of 2 heavy chains and 4 light chains.

This chain is Myosin-2 essential light chain (Mlc-c), found in Drosophila melanogaster (Fruit fly).